Reading from the N-terminus, the 1393-residue chain is Protein strawberry notch homolog 1 (1393 aa).

Residues 129 to 148 (STRPSVSAPTVRNAMTSAPS) are disordered. The residue at position 148 (serine 148) is a Phosphoserine. Lysine 149 carries the post-translational modification N6-acetyllysine. Phosphoserine occurs at positions 162 and 214. N6-acetyllysine is present on lysine 413. Residues 687-840 (APSNNSSPRD…ANSNTNSNSS (154 aa)) form a disordered region. Residues serine 692, serine 693, and serine 697 each carry the phosphoserine modification. Residues 697–716 (SPCKENKIKKRKGEEITREA) are compositionally biased toward basic and acidic residues. Residues 733-747 (SGSESDASDNEESDY) show a composition bias toward acidic residues. Residues serine 754, serine 755, and serine 768 each carry the phosphoserine modification. Residues 756–775 (GDDDDFNPFLDESNEDDEND) are compositionally biased toward acidic residues. Residues 781–793 (KDHKKNKEKKKKK) are compositionally biased toward basic residues. 2 positions are modified to phosphoserine: serine 794 and serine 815. Positions 824–840 (PAPNSTPANSNTNSNSS) are enriched in low complexity. A coiled-coil region spans residues 843-870 (TSQDAVERAQQMKKDLLDKLEKLAEDLP). N6-acetyllysine is present on lysine 1222. At serine 1386 the chain carries Phosphoserine.

This sequence belongs to the SBNO family.

The protein resides in the nucleus. Plays a crucial role in the regulation of neural stem cells (NSCs) proliferation. Enhances the phosphorylation of GSK3B through the PI3K-Akt signaling pathway, thereby upregulating the Wnt/beta-catenin signaling pathway and promoting the proliferation of NSCs. Improves ischemic stroke recovery while inhibiting neuroinflammation through small extracellular vesicles (sEVs)-mediated mechanism. Enhances the secretion of sEVs from NSCs, which in turn inhibit both the MAPK and NF-kappaB pathways in microglia. This inhibition suppresses the pro-inflammatory M1 polarization of microglia, promoting a shift towards the M2 anti-inflammatory phenotype, which is beneficial for reducing neuroinflammation. This is Protein strawberry notch homolog 1 (SBNO1) from Homo sapiens (Human).